We begin with the raw amino-acid sequence, 549 residues long: Glucose-6-phosphate isomerase (549 aa).

An N6-acetyllysine mark is found at lysine 80, lysine 228, and lysine 234. Catalysis depends on glutamate 355, which acts as the Proton donor. Active-site residues include histidine 386 and lysine 514.

The protein belongs to the GPI family.

Its subcellular location is the cytoplasm. The enzyme catalyses alpha-D-glucose 6-phosphate = beta-D-fructose 6-phosphate. It functions in the pathway carbohydrate biosynthesis; gluconeogenesis. The protein operates within carbohydrate degradation; glycolysis; D-glyceraldehyde 3-phosphate and glycerone phosphate from D-glucose: step 2/4. In terms of biological role, catalyzes the reversible isomerization of glucose-6-phosphate to fructose-6-phosphate. This is Glucose-6-phosphate isomerase from Escherichia fergusonii (strain ATCC 35469 / DSM 13698 / CCUG 18766 / IAM 14443 / JCM 21226 / LMG 7866 / NBRC 102419 / NCTC 12128 / CDC 0568-73).